The sequence spans 229 residues: Orotate phosphoribosyltransferase (229 aa).

5-phospho-alpha-D-ribose 1-diphosphate is bound by residues R107, K108, K111, H113, and 133–141 (EDLTTAGGS). T137 is a binding site for orotate.

Belongs to the purine/pyrimidine phosphoribosyltransferase family. PyrE subfamily. As to quaternary structure, homodimer. Requires Mg(2+) as cofactor.

It carries out the reaction orotidine 5'-phosphate + diphosphate = orotate + 5-phospho-alpha-D-ribose 1-diphosphate. Its pathway is pyrimidine metabolism; UMP biosynthesis via de novo pathway; UMP from orotate: step 1/2. Functionally, catalyzes the transfer of a ribosyl phosphate group from 5-phosphoribose 1-diphosphate to orotate, leading to the formation of orotidine monophosphate (OMP). This is Orotate phosphoribosyltransferase from Rhizobium etli (strain ATCC 51251 / DSM 11541 / JCM 21823 / NBRC 15573 / CFN 42).